We begin with the raw amino-acid sequence, 534 residues long: Lysophosphatidylcholine acyltransferase 1 (534 aa).

A disordered region spans residues 1–25 (MRLRGRGPRAAPSSSSGAGDARRLA). At 1–57 (MRLRGRGPRAAPSSSSGAGDARRLAPPGRNPFVHELRLSALQKAQVAFMTLTLFPIR) the chain is on the cytoplasmic side. Residues 8–19 (PRAAPSSSSGAG) are compositionally biased toward low complexity. A helical; Signal-anchor for type II membrane protein membrane pass occupies residues 58–78 (LLFAAFMMLLAWPFALVASLG). Over 79–534 (PPDKEPEQPL…GRKNSCKKVD (456 aa)) the chain is Lumenal. Residues 135–140 (HSSYFD) carry the HXXXXD motif motif. 2 EF-hand domains span residues 379–414 (PVSD…VCRP) and 451–486 (ISEL…YPDF). Ca(2+)-binding residues include D392, S394, E398, and E403. Positions 531–534 (KKVD) match the Di-lysine motif motif.

This sequence belongs to the 1-acyl-sn-glycerol-3-phosphate acyltransferase family. Enriched in alveolar type II cells of lung. Also highly expressed in stomach.

The protein resides in the endoplasmic reticulum membrane. Its subcellular location is the golgi apparatus membrane. The protein localises to the cell membrane. It is found in the lipid droplet. The catalysed reaction is a 1-acyl-sn-glycero-3-phosphocholine + an acyl-CoA = a 1,2-diacyl-sn-glycero-3-phosphocholine + CoA. It carries out the reaction a 1-O-alkyl-sn-glycero-3-phosphocholine + acetyl-CoA = a 1-O-alkyl-2-acetyl-sn-glycero-3-phosphocholine + CoA. It catalyses the reaction a 1-acyl-sn-glycero-3-phosphate + an acyl-CoA = a 1,2-diacyl-sn-glycero-3-phosphate + CoA. The enzyme catalyses a 1-O-(1Z-alkenyl)-sn-glycero-3-phosphocholine + an acyl-CoA = a 1-O-(1Z-alkenyl)-2-acyl-sn-glycero-3-phosphocholine + CoA. The catalysed reaction is 1-acyl-sn-glycero-3-phospho-(1'-sn-glycerol) + an acyl-CoA = a 1,2-diacyl-sn-glycero-3-phospho-(1'-sn-glycerol) + CoA. It carries out the reaction a 1-acyl-sn-glycero-3-phosphocholine + hexadecanoyl-CoA = 1-acyl-2-hexadecanoyl-sn-glycero-3-phosphocholine + CoA. It catalyses the reaction a 1-acyl-sn-glycero-3-phosphate + hexadecanoyl-CoA = 1-acyl-2-hexadecanoyl-sn-glycero-3-phosphate + CoA. The enzyme catalyses 1-acyl-sn-glycero-3-phospho-(1'-sn-glycerol) + hexadecanoyl-CoA = 1-acyl-2-hexadecanoyl-sn-glycero-3-phospho-(1'-sn-glycerol) + CoA. The catalysed reaction is 1-hexadecanoyl-sn-glycero-3-phosphocholine + hexadecanoyl-CoA = 1,2-dihexadecanoyl-sn-glycero-3-phosphocholine + CoA. It carries out the reaction 1-O-hexadecyl-sn-glycero-3-phosphocholine + hexadecanoyl-CoA = 1-O-hexadecyl-2-hexadecanoyl-sn-glycero-3-phosphocholine + CoA. It catalyses the reaction a 1-O-(1Z-alkenyl)-sn-glycero-3-phosphocholine + hexadecanoyl-CoA = 1-O-(1Z)-alkenyl-2-hexadecanoyl-sn-glycero-3-phosphocholine + CoA. The enzyme catalyses 1-hexadecanoyl-sn-glycero-3-phospho-(1'-sn-glycerol) + hexadecanoyl-CoA = 1,2-dihexadecanoyl-sn-glycero-3-phospho-(1'-sn-glycerol) + CoA. The catalysed reaction is 1-dodecanoyl-sn-glycero-3-phosphocholine + hexadecanoyl-CoA = 1-dodecanoyl-2-hexadecanoyl-sn-glycero-3-phosphocholine + CoA. It carries out the reaction 1-tetradecanoyl-sn-glycero-3-phosphocholine + hexadecanoyl-CoA = 1-tetradecanoyl-2-hexadecanoyl-sn-glycero-3-phosphocholine + CoA. It catalyses the reaction 1-O-octadecyl-sn-glycero-3-phosphocholine + hexadecanoyl-CoA = 1-O-octadecyl-2-hexadecanoyl-sn-glycero-3-phosphocholine + CoA. The enzyme catalyses 1-octadecanoyl-sn-glycero-3-phosphocholine + hexadecanoyl-CoA = 1-octadecanoyl-2-hexadecanoyl-sn-glycero-3-phosphocholine + CoA. The catalysed reaction is 1-(9Z-octadecenoyl)-sn-glycero-3-phosphocholine + hexadecanoyl-CoA = 1-(9Z-octadecenoyl)-2-hexadecanoyl-sn-glycero-3-phosphocholine + CoA. It carries out the reaction 1-eicosanoyl-sn-glycero-3-phosphocholine + hexadecanoyl-CoA = 1-eicosanoyl-2-hexadecanoyl-sn-glycero-3-phosphocholine + CoA. It catalyses the reaction hexanoyl-CoA + 1-hexadecanoyl-sn-glycero-3-phosphocholine = 1-hexadecanoyl-2-hexanoyl-sn-glycero-3-phosphocholine + CoA. The enzyme catalyses octanoyl-CoA + 1-hexadecanoyl-sn-glycero-3-phosphocholine = 1-hexadecanoyl-2-octanoyl-sn-glycero-3-phosphocholine + CoA. The catalysed reaction is decanoyl-CoA + 1-hexadecanoyl-sn-glycero-3-phosphocholine = 1-hexadecanoyl-2-decanoyl-sn-glycero-3-phosphocholine + CoA. It carries out the reaction dodecanoyl-CoA + 1-hexadecanoyl-sn-glycero-3-phosphocholine = 1-hexadecanoyl-2-dodecanoyl-sn-glycero-3-phosphocholine + CoA. It catalyses the reaction tetradecanoyl-CoA + 1-hexadecanoyl-sn-glycero-3-phosphocholine = 1-hexadecanoyl-2-tetradecanoyl-sn-glycero-3-phosphocholine + CoA. The enzyme catalyses 1-hexadecanoyl-sn-glycero-3-phosphocholine + (9Z)-octadecenoyl-CoA = 1-hexadecanoyl-2-(9Z-octadecenoyl)-sn-glycero-3-phosphocholine + CoA. The catalysed reaction is (9Z,12Z)-octadecadienoyl-CoA + 1-hexadecanoyl-sn-glycero-3-phosphocholine = 1-hexadecanoyl-2-(9Z,12Z-octadecadienoyl)-sn-glycero-3-phosphocholine + CoA. It carries out the reaction (4Z,7Z,10Z,13Z,16Z,19Z)-docosahexaenoyl-CoA + 1-hexadecanoyl-sn-glycero-3-phosphocholine = 1-hexadecanoyl-2-(4Z,7Z,10Z,13Z,16Z,19Z-docosahexaenoyl)-sn-glycero-3-phosphocholine + CoA. It catalyses the reaction 1-hexadecanoyl-sn-glycero-3-phosphocholine + acetyl-CoA = 1-hexadecanoyl-2-acetyl-sn-glycero-3-phosphocholine + CoA. The enzyme catalyses eicosanoyl-CoA + 1-hexadecanoyl-sn-glycero-3-phosphocholine = 1-hexadecanoyl-2-eicosanoyl-sn-glycero-3-phosphocholine + CoA. The catalysed reaction is 1-O-hexadecyl-sn-glycero-3-phosphocholine + acetyl-CoA = 1-O-hexadecyl-2-acetyl-sn-glycero-3-phosphocholine + CoA. The protein operates within lipid metabolism; phospholipid metabolism. With respect to regulation, activity is stimulated by Mg(2+) or Mn(2+). Functionally, exhibits acyltransferase activity. Exhibits acetyltransferase activity. Activity is calcium-independent. Catalyzes the conversion of lysophosphatidylcholine (1-acyl-sn-glycero-3-phosphocholine or LPC) into phosphatidylcholine (1,2-diacyl-sn-glycero-3-phosphocholine or PC). Catalyzes the conversion 1-acyl-sn-glycerol-3-phosphate (lysophosphatidic acid or LPA) into 1,2-diacyl-sn-glycerol-3-phosphate (phosphatidic acid or PA) by incorporating an acyl moiety at the sn-2 position of the glycerol backbone. Displays a clear preference for saturated fatty acyl-CoAs, and 1-myristoyl or 1-palmitoyl LPC as acyl donors and acceptors, respectively. Involved in platelet-activating factor (PAF) biosynthesis by catalyzing the conversion of the PAF precursor, 1-O-alkyl-sn-glycero-3-phosphocholine (lyso-PAF) into 1-O-alkyl-2-acetyl-sn-glycero-3-phosphocholine (PAF). May synthesize phosphatidylcholine in pulmonary surfactant, thereby playing a pivotal role in respiratory physiology. Involved in the regulation of lipid droplet number and size. This Rattus norvegicus (Rat) protein is Lysophosphatidylcholine acyltransferase 1 (Lpcat1).